The following is a 286-amino-acid chain: Flagellar filament 33 kDa core protein (286 aa).

This sequence belongs to the bacterial flagellin family. The flagellum consists of an outer layer composed of repeating units of FlaA around a core that contains several antigenically related polypeptides.

The protein resides in the periplasmic flagellum. Its subcellular location is the periplasm. Functionally, component of the core of the flagella. This is Flagellar filament 33 kDa core protein from Treponema phagedenis.